Reading from the N-terminus, the 590-residue chain is Cyclin-dependent kinase-like 3 (590 aa).

The 283-residue stretch at 4–286 (YETLGKVGEG…SSDLLHHEYF (283 aa)) folds into the Protein kinase domain. Residues 10–18 (VGEGSYGTV) and K33 each bind ATP. A [NKR]KIAxRE motif is present at residues 45–51 (KIAMREI). Catalysis depends on D125, which acts as the Proton acceptor. Residue T158 is modified to Phosphothreonine. Position 160 is a phosphotyrosine (Y160). 2 disordered regions span residues 459 to 508 (RAKK…SNEN) and 547 to 590 (LKRE…PDVE). The segment covering 466–477 (SSQSIGQVMPNS) has biased composition (polar residues). 2 stretches are compositionally biased toward basic and acidic residues: residues 547–556 (LKRESKKTDS) and 580–590 (TERKKNLPDVE).

It belongs to the protein kinase superfamily. CMGC Ser/Thr protein kinase family. CDC2/CDKX subfamily.

Its subcellular location is the cytoplasm. The enzyme catalyses L-seryl-[protein] + ATP = O-phospho-L-seryl-[protein] + ADP + H(+). It carries out the reaction L-threonyl-[protein] + ATP = O-phospho-L-threonyl-[protein] + ADP + H(+). The protein is Cyclin-dependent kinase-like 3 of Macaca fascicularis (Crab-eating macaque).